The chain runs to 264 residues: 3-methyl-2-oxobutanoate hydroxymethyltransferase (264 aa).

Positions 45 and 84 each coordinate Mg(2+). 3-methyl-2-oxobutanoate is bound by residues 45–46, Asp-84, and Lys-112; that span reads DS. Glu-114 lines the Mg(2+) pocket. Glu-181 acts as the Proton acceptor in catalysis.

This sequence belongs to the PanB family. In terms of assembly, homodecamer; pentamer of dimers. Mg(2+) serves as cofactor.

Its subcellular location is the cytoplasm. The catalysed reaction is 3-methyl-2-oxobutanoate + (6R)-5,10-methylene-5,6,7,8-tetrahydrofolate + H2O = 2-dehydropantoate + (6S)-5,6,7,8-tetrahydrofolate. Its pathway is cofactor biosynthesis; (R)-pantothenate biosynthesis; (R)-pantoate from 3-methyl-2-oxobutanoate: step 1/2. In terms of biological role, catalyzes the reversible reaction in which hydroxymethyl group from 5,10-methylenetetrahydrofolate is transferred onto alpha-ketoisovalerate to form ketopantoate. The sequence is that of 3-methyl-2-oxobutanoate hydroxymethyltransferase from Shigella dysenteriae serotype 1 (strain Sd197).